The primary structure comprises 37 residues: Large ribosomal subunit protein bL36c (37 aa).

It belongs to the bacterial ribosomal protein bL36 family.

It is found in the plastid. It localises to the chloroplast. In Cycas taitungensis (Prince sago), this protein is Large ribosomal subunit protein bL36c.